We begin with the raw amino-acid sequence, 402 residues long: Subtilisin-like protease 9 (402 aa).

Residues 1 to 18 form the signal peptide; sequence MGFFRILFSLSLCALSLA. The propeptide occupies 19 to 120; sequence IPSKLIGLEN…VEVDRVVKLD (102 aa). The Inhibitor I9 domain occupies 36–119; that stretch reads SYIVVMKSAV…YVEVDRVVKL (84 aa). The 273-residue stretch at 130-402 folds into the Peptidase S8 domain; it reads SWGLGRISHR…KKLLYNGSGA (273 aa). Residues aspartate 162 and histidine 193 each act as charge relay system in the active site. N-linked (GlcNAc...) asparagine glycosylation is present at asparagine 254. The active-site Charge relay system is serine 348. N-linked (GlcNAc...) asparagine glycans are attached at residues asparagine 390 and asparagine 398.

The protein belongs to the peptidase S8 family.

Its subcellular location is the secreted. Functionally, secreted subtilisin-like serine protease with keratinolytic activity that contributes to pathogenicity. The sequence is that of Subtilisin-like protease 9 (SUB9) from Arthroderma gypseum (strain ATCC MYA-4604 / CBS 118893) (Microsporum gypseum).